We begin with the raw amino-acid sequence, 232 residues long: Ion-translocating oxidoreductase complex subunit E (232 aa).

The next 5 membrane-spanning stretches (helical) occupy residues 39–59 (LGLG…ISLV), 69–89 (IPVF…LVNA), 93–113 (GLYM…IIIG), 128–148 (AFDG…LGAT), and 182–202 (SFLL…LIAL).

It belongs to the NqrDE/RnfAE family. In terms of assembly, the complex is composed of six subunits: RnfA, RnfB, RnfC, RnfD, RnfE and RnfG.

The protein localises to the cell inner membrane. Functionally, part of a membrane-bound complex that couples electron transfer with translocation of ions across the membrane. This Shewanella oneidensis (strain ATCC 700550 / JCM 31522 / CIP 106686 / LMG 19005 / NCIMB 14063 / MR-1) protein is Ion-translocating oxidoreductase complex subunit E.